Reading from the N-terminus, the 117-residue chain is Fluoride-specific ion channel FluC 2 (117 aa).

4 consecutive transmembrane segments (helical) span residues 1–21 (MITI…RALI), 33–53 (IPIA…FMMG), 61–81 (MFPF…TLSS), and 94–114 (IRFV…CFYG). The Na(+) site is built by glycine 71 and threonine 74.

It belongs to the fluoride channel Fluc/FEX (TC 1.A.43) family.

It is found in the cell membrane. It carries out the reaction fluoride(in) = fluoride(out). Its activity is regulated as follows. Na(+) is not transported, but it plays an essential structural role and its presence is essential for fluoride channel function. Fluoride-specific ion channel. Important for reducing fluoride concentration in the cell, thus reducing its toxicity. The chain is Fluoride-specific ion channel FluC 2 from Staphylococcus epidermidis (strain ATCC 35984 / DSM 28319 / BCRC 17069 / CCUG 31568 / BM 3577 / RP62A).